A 130-amino-acid polypeptide reads, in one-letter code: Small ribosomal subunit protein uS8 (130 aa).

Belongs to the universal ribosomal protein uS8 family. Part of the 30S ribosomal subunit.

One of the primary rRNA binding proteins, it binds directly to 16S rRNA central domain where it helps coordinate assembly of the platform of the 30S subunit. The polypeptide is Small ribosomal subunit protein uS8 (Thermococcus gammatolerans (strain DSM 15229 / JCM 11827 / EJ3)).